The following is a 91-amino-acid chain: Small ribosomal subunit protein uS19 (91 aa).

This sequence belongs to the universal ribosomal protein uS19 family.

Functionally, protein S19 forms a complex with S13 that binds strongly to the 16S ribosomal RNA. The chain is Small ribosomal subunit protein uS19 from Dechloromonas aromatica (strain RCB).